We begin with the raw amino-acid sequence, 957 residues long: Vacuolar membrane protease (957 aa).

Residues 1–10 (MARYNPFSFT) are Cytoplasmic-facing. A helical transmembrane segment spans residues 11–31 (PGPVVFFTTVIYVGLFAALLV). Topologically, residues 32-369 (THLTVPDYPS…RVFVVFQLHT (338 aa)) are vacuolar. 3 N-linked (GlcNAc...) asparagine glycosylation sites follow: asparagine 48, asparagine 105, and asparagine 136. Histidine 152 and aspartate 164 together coordinate Zn(2+). Glutamate 198 serves as the catalytic Proton acceptor. Zn(2+)-binding residues include glutamate 199, glutamate 224, and histidine 297. Residues 370 to 390 (LFALCVTLLVVAPIALIGLTF) traverse the membrane as a helical segment. The Cytoplasmic portion of the chain corresponds to 391–423 (GLSKADKNYLLARKAFVYSSDDDNPVQLYGWRG). Residues 424–444 (FFRFPIVFVSATAVVVALAYL) form a helical membrane-spanning segment. Over 445–450 (LVRFNA) the chain is Vacuolar. A helical membrane pass occupies residues 451-471 (FIIYSSPFAVWSMMLSAWFFV). Topologically, residues 472–490 (AWFFSRGADAMRPSALQRM) are cytoplasmic. Residues 491–511 (YALIWLFIGSFVLLTIITVFV) traverse the membrane as a helical segment. Topologically, residues 512 to 521 (NNYQVVAGYP) are vacuolar. Residues 522 to 542 (ALFYFAVVFAALMLSYLELFF) traverse the membrane as a helical segment. The Cytoplasmic portion of the chain corresponds to 543–642 (APTKSAYARH…YPGEQEWSGK (100 aa)). Disordered stretches follow at residues 560–591 (RRNSESASRPLTGSTTAARSDDRPVADDDATE) and 603–628 (FTRYGSRRDSTSEGDEDHAQGSRRLD). The segment covering 564–577 (ESASRPLTGSTTAA) has biased composition (polar residues). Residues 643–663 (LPSWIWIIQLLLLAPLVIVLV) traverse the membrane as a helical segment. The Vacuolar segment spans residues 664 to 685 (GQVALLLTSALYQTPSDGNSPL). Residues 686–706 (FIYLAIAALSVLLLAPTGPFI) traverse the membrane as a helical segment. Residues 707-713 (HRFTYHV) lie on the Cytoplasmic side of the membrane. A helical transmembrane segment spans residues 714 to 734 (PTFLFLVCLATVIYNLVAFPF). The Vacuolar portion of the chain corresponds to 735–957 (SRDHRLKVYF…LVEGFKQFEI (223 aa)). Asparagine 782, asparagine 818, and asparagine 834 each carry an N-linked (GlcNAc...) asparagine glycan.

The protein belongs to the peptidase M28 family. Zn(2+) serves as cofactor.

It is found in the vacuole membrane. In terms of biological role, may be involved in vacuolar sorting and osmoregulation. In Pyrenophora tritici-repentis (strain Pt-1C-BFP) (Wheat tan spot fungus), this protein is Vacuolar membrane protease.